A 200-amino-acid chain; its full sequence is Riboflavin synthase (200 aa).

Lumazine-binding repeat units follow at residues 1-97 (MFSG…IGGH) and 98-190 (LLSG…VDTV). 2,4-dihydroxypteridine contacts are provided by residues 4 to 6 (GII), 48 to 50 (CLT), 62 to 67 (DVIPET), 101 to 103 (GHV), Lys132, 141 to 143 (SLT), and 155 to 160 (GLIPET).

Homotrimer.

The catalysed reaction is 2 6,7-dimethyl-8-(1-D-ribityl)lumazine + H(+) = 5-amino-6-(D-ribitylamino)uracil + riboflavin. It participates in cofactor biosynthesis; riboflavin biosynthesis; riboflavin from 2-hydroxy-3-oxobutyl phosphate and 5-amino-6-(D-ribitylamino)uracil: step 2/2. In terms of biological role, catalyzes the dismutation of two molecules of 6,7-dimethyl-8-ribityllumazine, resulting in the formation of riboflavin and 5-amino-6-(D-ribitylamino)uracil. The polypeptide is Riboflavin synthase (ribE) (Chlamydia pneumoniae (Chlamydophila pneumoniae)).